Consider the following 331-residue polypeptide: Cytoskeleton protein RodZ (331 aa).

Topologically, residues 1–111 are cytoplasmic; it reads MNTEATQDHQ…LGKRRKKRDG (111 aa). The 53-residue stretch at 19–71 folds into the HTH cro/C1-type domain; the sequence is LRHAREQLGLSQQAVAERLCLKVSTVRDIEDDKAPADLASTFLRGYIRSYARL. Residues 30–49 constitute a DNA-binding region (H-T-H motif); that stretch reads QQAVAERLCLKVSTVRDIED. A helical; Signal-anchor for type II membrane protein membrane pass occupies residues 112-132; sequence WLMSFTWLVLFVVIGLSGAWW. At 133-331 the chain is on the periplasmic side; sequence WQDHKAQQEE…TLNAESSPAQ (199 aa). The span at 146–166 shows a compositional bias: polar residues; it reads MADQSSAELNGGDANSQNVPL. The segment at 146–238 is disordered; the sequence is MADQSSAELN…ASPLPTDQAN (93 aa). Composition is skewed to low complexity over residues 167–202 and 216–234; these read DTSA…TPAD and TAGT…PLPT.

Belongs to the RodZ family.

The protein resides in the cell inner membrane. Functionally, cytoskeletal protein that is involved in cell-shape control through regulation of the length of the long axis. This Klebsiella pneumoniae subsp. pneumoniae (strain ATCC 700721 / MGH 78578) protein is Cytoskeleton protein RodZ.